Here is a 382-residue protein sequence, read N- to C-terminus: Leucine carboxyl methyltransferase 1 (382 aa).

Residues 1-11 show a composition bias toward polar residues; it reads MSAPQIPNLNT. The segment at 1–45 is disordered; that stretch reads MSAPQIPNLNTLRRGGGRGRFRARGGPDSSSSSGNKDRVVQGTDN. S-adenosyl-L-methionine-binding positions include arginine 88, glycine 121, aspartate 146, 193–194, and glutamate 230; that span reads DL.

It belongs to the methyltransferase superfamily. LCMT family.

The enzyme catalyses [phosphatase 2A protein]-C-terminal L-leucine + S-adenosyl-L-methionine = [phosphatase 2A protein]-C-terminal L-leucine methyl ester + S-adenosyl-L-homocysteine. In terms of biological role, methylates the carboxyl group of the C-terminal leucine residue of protein phosphatase 2A catalytic subunits to form alpha-leucine ester residues. The polypeptide is Leucine carboxyl methyltransferase 1 (ppm1) (Emericella nidulans (strain FGSC A4 / ATCC 38163 / CBS 112.46 / NRRL 194 / M139) (Aspergillus nidulans)).